The chain runs to 101 residues: Small ribosomal subunit protein uS14 (101 aa).

This sequence belongs to the universal ribosomal protein uS14 family. As to quaternary structure, part of the 30S ribosomal subunit. Contacts proteins S3 and S10.

In terms of biological role, binds 16S rRNA, required for the assembly of 30S particles and may also be responsible for determining the conformation of the 16S rRNA at the A site. The sequence is that of Small ribosomal subunit protein uS14 from Alcanivorax borkumensis (strain ATCC 700651 / DSM 11573 / NCIMB 13689 / SK2).